The chain runs to 271 residues: Ribosomal RNA small subunit methyltransferase A (271 aa).

The S-adenosyl-L-methionine site is built by Asn18, Leu20, Gly45, Glu66, Asp91, and Asn112.

It belongs to the class I-like SAM-binding methyltransferase superfamily. rRNA adenine N(6)-methyltransferase family. RsmA subfamily.

The protein resides in the cytoplasm. It catalyses the reaction adenosine(1518)/adenosine(1519) in 16S rRNA + 4 S-adenosyl-L-methionine = N(6)-dimethyladenosine(1518)/N(6)-dimethyladenosine(1519) in 16S rRNA + 4 S-adenosyl-L-homocysteine + 4 H(+). Specifically dimethylates two adjacent adenosines (A1518 and A1519) in the loop of a conserved hairpin near the 3'-end of 16S rRNA in the 30S particle. May play a critical role in biogenesis of 30S subunits. The protein is Ribosomal RNA small subunit methyltransferase A of Vibrio cholerae serotype O1 (strain ATCC 39315 / El Tor Inaba N16961).